The primary structure comprises 293 residues: 4-hydroxy-tetrahydrodipicolinate synthase (293 aa).

Thr45 lines the pyruvate pocket. Tyr133 serves as the catalytic Proton donor/acceptor. Lys161 functions as the Schiff-base intermediate with substrate in the catalytic mechanism. Pyruvate is bound at residue Ile203.

It belongs to the DapA family. Homotetramer; dimer of dimers.

The protein localises to the cytoplasm. The enzyme catalyses L-aspartate 4-semialdehyde + pyruvate = (2S,4S)-4-hydroxy-2,3,4,5-tetrahydrodipicolinate + H2O + H(+). The protein operates within amino-acid biosynthesis; L-lysine biosynthesis via DAP pathway; (S)-tetrahydrodipicolinate from L-aspartate: step 3/4. Its function is as follows. Catalyzes the condensation of (S)-aspartate-beta-semialdehyde [(S)-ASA] and pyruvate to 4-hydroxy-tetrahydrodipicolinate (HTPA). The protein is 4-hydroxy-tetrahydrodipicolinate synthase of Aliivibrio fischeri (strain ATCC 700601 / ES114) (Vibrio fischeri).